Consider the following 426-residue polypeptide: Alpha-ionylideneethane synthase abl3 (426 aa).

This sequence belongs to the alpha-ionylideneethane synthase family.

It participates in hormone biosynthesis. Functionally, alpha-ionylideneethane synthase; part of the gene cluster that mediates the biosynthesis of abscisic acid (ABA), a phytohormone that acts antagonistically toward salicylic acid (SA), jasmonic acid (JA) and ethylene (ETH) signaling, to impede plant defense responses. The first step of the pathway catalyzes the reaction from farnesyl diphosphate to alpha-ionylideneethane performed by the alpha-ionylideneethane synthase abl3 via a three-step reaction mechanism involving 2 neutral intermediates, beta-farnesene and allofarnesene. The cytochrome P450 monooxygenase abl1 might then be involved in the conversion of alpha-ionylideneethane to alpha-ionylideneacetic acid. Alpha-ionylideneacetic acid is further converted to abscisic acid in 2 steps involving the cytochrome P450 monooxygenase abl2 and the short-chain dehydrogenase/reductase abl4, via the intermediates 1'-deoxy-ABA or 1',4'-trans-diol-ABA, depending on the order of action of these 2 enzymes. Abl2 is responsible for the hydroxylation of carbon atom C-1' and abl4 might be involved in the oxidation of the C-4' carbon atom. The chain is Alpha-ionylideneethane synthase abl3 from Leptosphaeria maculans (strain JN3 / isolate v23.1.3 / race Av1-4-5-6-7-8) (Blackleg fungus).